A 543-amino-acid chain; its full sequence is Splicing factor U2af large subunit B (543 aa).

Residues 1–10 are compositionally biased toward gly residues; the sequence is MADDNGGGGD. Positions 1–171 are disordered; the sequence is MADDNGGGGD…IPTPSQLPGS (171 aa). Composition is skewed to basic and acidic residues over residues 17-78 and 88-114; these read VRPE…DRDR and EHRDRPDDHDRHRSRDSERRRDRERDG. Positions 115–126 are enriched in basic residues; the sequence is HRRHRSRSRSRS. 3 RRM domains span residues 207 to 290, 327 to 405, and 446 to 532; these read RRVY…RPTD, DRIF…RANQ, and QVVT…YPEN.

Belongs to the splicing factor SR family.

It localises to the nucleus. Necessary for the splicing of pre-mRNA. The sequence is that of Splicing factor U2af large subunit B (U2AF65B) from Triticum aestivum (Wheat).